The sequence spans 203 residues: Recombination protein RecR (203 aa).

The C4-type zinc finger occupies C57–C73. One can recognise a Toprim domain in the interval N81–P175.

It belongs to the RecR family.

In terms of biological role, may play a role in DNA repair. It seems to be involved in an RecBC-independent recombinational process of DNA repair. It may act with RecF and RecO. The sequence is that of Recombination protein RecR from Pelagibacter ubique (strain HTCC1062).